A 303-amino-acid chain; its full sequence is Putative S-adenosyl-L-methionine-dependent methyltransferase ML2020 (303 aa).

S-adenosyl-L-methionine-binding positions include D130 and 159-160; that span reads DL.

This sequence belongs to the UPF0677 family.

Functionally, exhibits S-adenosyl-L-methionine-dependent methyltransferase activity. This Mycobacterium leprae (strain TN) protein is Putative S-adenosyl-L-methionine-dependent methyltransferase ML2020.